A 324-amino-acid polypeptide reads, in one-letter code: Granaticin polyketide synthase bifunctional cyclase/dehydratase (324 aa).

Positions 1-21 (MVQPAATPVSLPSPTVHRSEH) are disordered.

The protein operates within antibiotic biosynthesis; granaticin biosynthesis. In terms of biological role, is needed for correct cyclization of the oligoketide leading to isochromanequinone formation. The chain is Granaticin polyketide synthase bifunctional cyclase/dehydratase (gra-orf4) from Streptomyces violaceoruber.